The primary structure comprises 345 residues: S-adenosylmethionine:tRNA ribosyltransferase-isomerase (345 aa).

Belongs to the QueA family. Monomer.

It is found in the cytoplasm. It catalyses the reaction 7-aminomethyl-7-carbaguanosine(34) in tRNA + S-adenosyl-L-methionine = epoxyqueuosine(34) in tRNA + adenine + L-methionine + 2 H(+). It participates in tRNA modification; tRNA-queuosine biosynthesis. Its function is as follows. Transfers and isomerizes the ribose moiety from AdoMet to the 7-aminomethyl group of 7-deazaguanine (preQ1-tRNA) to give epoxyqueuosine (oQ-tRNA). The polypeptide is S-adenosylmethionine:tRNA ribosyltransferase-isomerase (Shewanella putrefaciens (strain CN-32 / ATCC BAA-453)).